Reading from the N-terminus, the 353-residue chain is DNA polymerase IV (353 aa).

The 182-residue stretch at 6 to 187 (IIHVDCDCFY…LPVSKLHGVG (182 aa)) folds into the UmuC domain. Residues Asp-10 and Asp-105 each contribute to the Mg(2+) site. The active site involves Glu-106.

The protein belongs to the DNA polymerase type-Y family. In terms of assembly, monomer. Requires Mg(2+) as cofactor.

It is found in the cytoplasm. The enzyme catalyses DNA(n) + a 2'-deoxyribonucleoside 5'-triphosphate = DNA(n+1) + diphosphate. In terms of biological role, poorly processive, error-prone DNA polymerase involved in untargeted mutagenesis. Copies undamaged DNA at stalled replication forks, which arise in vivo from mismatched or misaligned primer ends. These misaligned primers can be extended by PolIV. Exhibits no 3'-5' exonuclease (proofreading) activity. May be involved in translesional synthesis, in conjunction with the beta clamp from PolIII. This chain is DNA polymerase IV, found in Pseudomonas fluorescens (strain Pf0-1).